Here is a 285-residue protein sequence, read N- to C-terminus: N(G),N(G)-dimethylarginine dimethylaminohydrolase 1 (285 aa).

Residue Ala-2 is modified to N-acetylalanine. Leu-30 is a binding site for substrate. Ser-33 bears the Phosphoserine mark. The substrate site is built by Asp-73, Glu-78, Asp-79, Arg-98, and Arg-145. His-173 (proton donor) is an active-site residue. Cys-222 carries the S-nitrosocysteine modification. A substrate-binding site is contributed by Val-268. At Cys-274 the chain carries S-nitrosocysteine. Cys-274 acts as the Nucleophile in catalysis. A Zn(2+)-binding site is contributed by Cys-274.

The protein belongs to the DDAH family. Monomer. As to expression, detected in skeletal muscle, lung, heart, liver, kidney and brain (at protein level).

The catalysed reaction is N(omega),N(omega)-dimethyl-L-arginine + H2O = dimethylamine + L-citrulline. It carries out the reaction N(omega)-methyl-L-arginine + H2O = L-citrulline + methylamine. Its activity is regulated as follows. Inhibited by zinc ions. Functionally, hydrolyzes N(G),N(G)-dimethyl-L-arginine (ADMA) and N(G)-monomethyl-L-arginine (MMA) which act as inhibitors of NOS. Has therefore a role in the regulation of nitric oxide generation. The polypeptide is N(G),N(G)-dimethylarginine dimethylaminohydrolase 1 (Ddah1) (Mus musculus (Mouse)).